The chain runs to 189 residues: MAGKRALVILAKGAEEMETVIPVDVMRRAGIAVTVAGLAGKEPVQCSREVMICPDSSLEDAHKQGPYDVVLLPGGLLGAQNLSESPAVKEVLKDQEGRKGLIAAICAGPTALLAHGIAYGSTVTTHPGAKDKMMAGDHYKYSEARVQKDGNVITSRGPGTSFEFALTIVEELMGAEVAAQVKAPLILKD.

2 S-palmitoyl cysteine lipidation sites follow: cysteine 46 and cysteine 53. Phosphotyrosine is present on tyrosine 67. Cysteine 106 carries S-palmitoyl cysteine lipidation. Residue cysteine 106 is the Nucleophile of the active site. Cysteine 106 carries the cysteine sulfinic acid (-SO2H) modification. Residue cysteine 106 is modified to Cysteine sulfinic acid (-SO2H); alternate. A lipid anchor (S-palmitoyl cysteine; alternate) is attached at cysteine 106. The active site involves histidine 126. A Glycyl lysine isopeptide (Lys-Gly) (interchain with G-Cter in SUMO) cross-link involves residue lysine 130. An N6-acetyllysine modification is found at lysine 148. Lysine 182 bears the N6-succinyllysine mark.

It belongs to the peptidase C56 family. As to quaternary structure, homodimer. It depends on Deglycase activity does not require glutathione as a cofactor, however, glycated glutathione constitutes a PARK7 substrate. as a cofactor. Sumoylated on Lys-130 by pias2 or pias4; which is essential for cell-growth promoting activity and transforming activity. In terms of processing, undergoes cleavage of a C-terminal peptide and subsequent activation of protease activity in response to oxidative stress. As to expression, larval brain and gut from 96 hours post-fertilization (hpf). Ubiquitous in adult; most abundant in brain, eye, heart and muscle. Within brain, neuronal expression is widespread, particularly in the cerebellum, medullary reticular formation and diencephalon. Expressed in major forebrain and diencephalic dopaminergic cell groups.

Its subcellular location is the cell membrane. The protein resides in the cytoplasm. It is found in the nucleus. The protein localises to the membrane raft. It localises to the mitochondrion. Its subcellular location is the endoplasmic reticulum. It carries out the reaction N(omega)-(1-hydroxy-2-oxopropyl)-L-arginyl-[protein] + H2O = lactate + L-arginyl-[protein] + H(+). It catalyses the reaction N(6)-(1-hydroxy-2-oxopropyl)-L-lysyl-[protein] + H2O = lactate + L-lysyl-[protein] + H(+). The catalysed reaction is S-(1-hydroxy-2-oxopropyl)-L-cysteinyl-[protein] + H2O = lactate + L-cysteinyl-[protein] + H(+). The enzyme catalyses N(omega)-(1-hydroxy-2-oxoethyl)-L-arginyl-[protein] + H2O = L-arginyl-[protein] + glycolate + H(+). It carries out the reaction N(6)-(1-hydroxy-2-oxoethyl)-L-lysyl-[protein] + H2O = glycolate + L-lysyl-[protein] + H(+). It catalyses the reaction S-(1-hydroxy-2-oxoethyl)-L-cysteinyl-[protein] + H2O = glycolate + L-cysteinyl-[protein] + H(+). The catalysed reaction is N(2)-(1-hydroxy-2-oxopropyl)-dGTP + H2O = lactate + dGTP + H(+). The enzyme catalyses N(2)-(1-hydroxy-2-oxopropyl)-GTP + H2O = lactate + GTP + H(+). It carries out the reaction N(2)-(1-hydroxy-2-oxopropyl)-GDP + H2O = lactate + GDP + H(+). It catalyses the reaction N(2)-(1-hydroxy-2-oxopropyl)-GMP + H2O = lactate + GMP + H(+). The catalysed reaction is N(2)-(1-hydroxy-2-oxoethyl)-dGTP + H2O = dGTP + glycolate + H(+). The enzyme catalyses N(2)-(1-hydroxy-2-oxoethyl)-GTP + H2O = glycolate + GTP + H(+). It carries out the reaction N(2)-(1-hydroxy-2-oxoethyl)-GDP + H2O = glycolate + GDP + H(+). It catalyses the reaction N(2)-(1-hydroxy-2-oxoethyl)-GMP + H2O = glycolate + GMP + H(+). The catalysed reaction is an N(2)-(1-hydroxy-2-oxopropyl)-guanosine in RNA + H2O = a guanosine in RNA + lactate + H(+). The enzyme catalyses an N(2)-(1-hydroxy-2-oxopropyl)-2'-deoxyguanosine in DNA + H2O = a 2'-deoxyguanosine in DNA + lactate + H(+). It carries out the reaction an N(2)-(1-hydroxy-2-oxoethyl)-guanosine in RNA + H2O = a guanosine in RNA + glycolate + H(+). It catalyses the reaction an N(2)-(1-hydroxy-2-oxoethyl)-2'-deoxyguanosine in DNA + H2O = a 2'-deoxyguanosine in DNA + glycolate + H(+). Multifunctional protein with controversial molecular function which plays an important role in cell protection against oxidative stress and cell death acting as oxidative stress sensor and redox-sensitive chaperone and protease. It is involved in neuroprotective mechanisms like the stabilization of NFE2L2 and PINK1 proteins, male fertility as a positive regulator of androgen signaling pathway as well as cell growth and transformation through, for instance, the modulation of NF-kappa-B signaling pathway. Has been described as a protein and nucleotide deglycase that catalyzes the deglycation of the Maillard adducts formed between amino groups of proteins or nucleotides and reactive carbonyl groups of glyoxals. But this function is rebuted by other works. As a protein deglycase, repairs methylglyoxal- and glyoxal-glycated proteins, and releases repaired proteins and lactate or glycolate, respectively. Deglycates cysteine, arginine and lysine residues in proteins, and thus reactivates these proteins by reversing glycation by glyoxals. Acts on early glycation intermediates (hemithioacetals and aminocarbinols), preventing the formation of advanced glycation endproducts (AGE) that cause irreversible damage. Also functions as a nucleotide deglycase able to repair glycated guanine in the free nucleotide pool (GTP, GDP, GMP, dGTP) and in DNA and RNA. Is thus involved in a major nucleotide repair system named guanine glycation repair (GG repair), dedicated to reversing methylglyoxal and glyoxal damage via nucleotide sanitization and direct nucleic acid repair. Protects histones from adduction by methylglyoxal, controls the levels of methylglyoxal-derived argininine modifications on chromatin. Displays a very low glyoxalase activity that may reflect its deglycase activity. It is involved in neuroprotective mechanisms as well as cell growth and transformation. Its involvement in protein repair could also explain other unrelated functions. Eliminates hydrogen peroxide and protects cells against hydrogen peroxide-induced cell death. Required for correct mitochondrial morphology and function as well as for autophagy of dysfunctional mitochondria. Regulates astrocyte inflammatory responses, may modulate lipid rafts-dependent endocytosis in astrocytes and neuronal cells. Binds to a number of mRNAs containing multiple copies of GG or CC motifs and partially inhibits their translation but dissociates following oxidative stress. Metal-binding protein able to bind copper as well as toxic mercury ions, enhances the cell protection mechanism against induced metal toxicity. The protein is Parkinson disease protein 7 homolog of Danio rerio (Zebrafish).